Consider the following 228-residue polypeptide: DOPA 4,5-dioxygenase (228 aa).

In terms of assembly, homodimer. Expressed at high level in coloured cap tissue and at least 10 times lower level in the stipe.

Its subcellular location is the cytoplasm. Its pathway is pigment biosynthesis; betalain biosynthesis. Functionally, extradiol dioxygenase that opens up the cyclic ring of DOPA between carbons 4 and 5 thus producing an unstable seco-DOPA that rearranges non-enzymatically to betalamic acid. Can also catalyze the formation of muscaflavin (a pigment found in the hygrocybe mushrooms family and of some amanita species only) by a 2,3-extradiol cleavage of DOPA. The sequence is that of DOPA 4,5-dioxygenase (DODA) from Amanita muscaria (Fly agaric).